Consider the following 176-residue polypeptide: Epididymal-specific lipocalin-9 (176 aa).

The signal sequence occupies residues 1-15 (MALLLLSLGLSLIAA). N-linked (GlcNAc...) asparagine glycosylation is found at Asn68 and Asn129. Cys83 and Cys161 form a disulfide bridge.

This sequence belongs to the calycin superfamily. Lipocalin family.

It localises to the secreted. The chain is Epididymal-specific lipocalin-9 from Homo sapiens (Human).